A 292-amino-acid chain; its full sequence is MEGKEEDVRLGANKFSERQPIGTAAQGAGAGDDDKDYKEPPPAPLFEPGELKSWSFYRAGIAEFVATFLFLYITVLTVMGVSKSTSKCATVGIQGIAWSFGGMIFALVYCTAGISGGHINPAVTFGLFLARKLSLTRAIFYIIMQCLGAICGAGVVKGFQQGLYMGNGGGANVVAPGYTKGDGLGAEIVGTFILVYTVFSATDAKRNARDSHVPILAPLPIGFAVFLVHLATIPITGTGINPARSLGAAIIYNRDHAWSDHWIFWVGPFIGAALAAIYHQVIIRAIPFKSRS.

The tract at residues 1–42 (MEGKEEDVRLGANKFSERQPIGTAAQGAGAGDDDKDYKEPPP) is disordered. 2 helical membrane passes run 61–81 (IAEF…VMGV) and 96–118 (IAWS…SGGH). Residues 120 to 122 (NPA) carry the NPA 1 motif. 3 helical membrane passes run 139–159 (IFYI…VKGF), 181–201 (GDGL…VFSA), and 215–235 (ILAP…TIPI). Residues 241-243 (NPA) carry the NPA 2 motif. The helical transmembrane segment at 263–283 (IFWVGPFIGAALAAIYHQVII) threads the bilayer.

This sequence belongs to the MIP/aquaporin (TC 1.A.8) family. PIP (TC 1.A.8.11) subfamily.

The protein localises to the cell membrane. Functionally, aquaporins facilitate the transport of water and small neutral solutes across cell membranes. This chain is Aquaporin PIP1-3/PIP1-4 (PIP1-3), found in Zea mays (Maize).